Here is a 157-residue protein sequence, read N- to C-terminus: Protein Smg (157 aa).

Belongs to the Smg family.

The polypeptide is Protein Smg (Escherichia coli O7:K1 (strain IAI39 / ExPEC)).